We begin with the raw amino-acid sequence, 390 residues long: Magnesium-protoporphyrin IX monomethyl ester [oxidative] cyclase (390 aa).

The interval 1 to 20 (MSQSTIESTNKKEINKGKAP) is disordered.

It belongs to the AcsF family. Fe cation is required as a cofactor.

The catalysed reaction is Mg-protoporphyrin IX 13-monomethyl ester + 3 NADPH + 3 O2 + 2 H(+) = 3,8-divinyl protochlorophyllide a + 3 NADP(+) + 5 H2O. Its pathway is porphyrin-containing compound metabolism; chlorophyll biosynthesis (light-independent). Catalyzes the formation of the isocyclic ring in chlorophyll biosynthesis. Mediates the cyclase reaction, which results in the formation of divinylprotochlorophyllide (Pchlide) characteristic of all chlorophylls from magnesium-protoporphyrin IX 13-monomethyl ester (MgPMME). The chain is Magnesium-protoporphyrin IX monomethyl ester [oxidative] cyclase from Prochlorococcus marinus (strain MIT 9301).